The chain runs to 548 residues: MIEFAVAGLSDPVQATVPWLSLSILVPIGGALLIPFIPDQGEGKQIRWYALIVTLITFLITVAAYLTGYDPSLSGLQLFERVSWLPEIGLTWTVGADGLSMPLILLTSFITSLACLAAWPVTFKPRLFFFLLLAMDGGQIAVFAVQDMLLFFLAWELELLPVYLLLAIWGGKKRQYAATKFILYTAGSSLFILLAALAMGFFGGGTPSFEYTALAAKDFGSGFQLLCYAGLLIAFGVKLPIVPLHTWLPDAHGEATAPVHMLLAGILLKMGGYALLRFNCELLPAAHAQFAPLLIVLGVVNIIYAALTSFAQRNLKRKIAYSSISHMGFVLIGIGSFSVLGSSGAMLQMISHGLIGASLFFLVGATYDRTHTLLLDEMGGIGQKMRIMFALWTVCALASLALPGMSGFVSELMIFAGFATDEAYTLPFRVVICGLAAVGVVLTPVYLLSMLREIFFGKEKAELASHTNLVDAEPREVYIIGCLLVPIIGIGLYPRLMTDSFSSSIEALVSRDVTAMEQLTKPTAPLIRGQSTVPAILRAPNLGTPTPK.

A run of 14 helical transmembrane segments spans residues 17 to 37, 48 to 68, 103 to 123, 127 to 147, 149 to 169, 181 to 201, 222 to 242, 256 to 276, 290 to 310, 327 to 347, 348 to 368, 389 to 409, 430 to 450, and 477 to 497; these read VPWLSLSILVPIGGALLIPFI, WYALIVTLITFLITVAAYLTG, LILLTSFITSLACLAAWPVTF, LFFFLLLAMDGGQIAVFAVQD, LLFFLAWELELLPVYLLLAIW, FILYTAGSSLFILLAALAMGF, GFQLLCYAGLLIAFGVKLPIV, TAPVHMLLAGILLKMGGYALL, FAPLLIVLGVVNIIYAALTSF, MGFVLIGIGSFSVLGSSGAML, QMISHGLIGASLFFLVGATYD, FALWTVCALASLALPGMSGFV, VVICGLAAVGVVLTPVYLLSM, and VYIIGCLLVPIIGIGLYPRLM.

This sequence belongs to the complex I subunit 4 family.

The protein localises to the cellular thylakoid membrane. The catalysed reaction is a plastoquinone + NADH + (n+1) H(+)(in) = a plastoquinol + NAD(+) + n H(+)(out). It carries out the reaction a plastoquinone + NADPH + (n+1) H(+)(in) = a plastoquinol + NADP(+) + n H(+)(out). Its function is as follows. NDH-1 shuttles electrons from NAD(P)H, via FMN and iron-sulfur (Fe-S) centers, to quinones in the respiratory chain. The immediate electron acceptor for the enzyme in this species is believed to be plastoquinone. Couples the redox reaction to proton translocation (for every two electrons transferred, four hydrogen ions are translocated across the cytoplasmic membrane), and thus conserves the redox energy in a proton gradient. The sequence is that of NAD(P)H-quinone oxidoreductase chain 4 from Synechococcus sp. (strain CC9902).